The primary structure comprises 383 residues: Adaptive-response sensory kinase SasA (383 aa).

The 214-residue stretch at 152–365 folds into the Histidine kinase domain; the sequence is MVAHELRTPL…CFTFTVPIWQ (214 aa). The residue at position 155 (H155) is a Phosphohistidine; by autocatalysis.

Homooligomerizes. Interacts with KaiC. Participates in the KaiABC clock complex, whose core is composed of a KaiC homohexamer, 6 KaiB and up to 6 KaiA dimers. SasA and KaiB(fs) compete to bind to KaiC.

It carries out the reaction ATP + protein L-histidine = ADP + protein N-phospho-L-histidine.. Member of the two-component regulatory system SasA/RpaA involved in genome-wide circadian gene expression. One of several clock output pathways. Participates in the Kai clock protein complex, the main circadian regulator in cyanobacteria, via its interaction with KaiC. KaiC enhances the autophosphorylation activity of SasA, which then transfers its phosphate group to RpaA to activate it. In addition to its output function, recruits fold-shifted KaiB (KaiB(fs)) to KaiC to cooperatively form the KaiB(6):KaiC(6) complex (independent of SasA kinase activity). Required for robustness of the circadian rhythm of gene expression and is involved in clock output, also required for adaptation to light/dark cycles. The protein is Adaptive-response sensory kinase SasA of Parasynechococcus marenigrum (strain WH8102).